The primary structure comprises 192 residues: uncharacterized protein (192 aa).

Residues 29 to 160 (RRQAAVLIPV…PLDIYRRGDS (132 aa)) enclose the Nudix hydrolase domain. Residues 67–89 (GAVDSSDASLIAAALREAQEEVA) carry the Nudix box motif. Residues E83 and E87 each contribute to the Mg(2+) site.

The protein belongs to the Nudix hydrolase family. PCD1 subfamily. Mn(2+) is required as a cofactor. The cofactor is Mg(2+).

Functionally, probably mediates the hydrolysis of some nucleoside diphosphate derivatives. This is an uncharacterized protein from Citrobacter koseri (strain ATCC BAA-895 / CDC 4225-83 / SGSC4696).